The chain runs to 327 residues: Tryptophan--tRNA ligase (327 aa).

Residues 9 to 11 (QPS) and 17 to 18 (GN) contribute to the ATP site. The 'HIGH' region motif lies at 10–18 (PSGTLTLGN). Asp132 contacts L-tryptophan. ATP-binding positions include 144–146 (GDD), Ile183, and 192–196 (KMSKS). The 'KMSKS' region signature appears at 192–196 (KMSKS).

This sequence belongs to the class-I aminoacyl-tRNA synthetase family. In terms of assembly, homodimer.

Its subcellular location is the cytoplasm. The enzyme catalyses tRNA(Trp) + L-tryptophan + ATP = L-tryptophyl-tRNA(Trp) + AMP + diphosphate + H(+). In terms of biological role, catalyzes the attachment of tryptophan to tRNA(Trp). The sequence is that of Tryptophan--tRNA ligase from Oceanobacillus iheyensis (strain DSM 14371 / CIP 107618 / JCM 11309 / KCTC 3954 / HTE831).